Here is a 49-residue protein sequence, read N- to C-terminus: Small, acid-soluble spore protein K (49 aa).

The interval Met-1–Arg-49 is disordered. Basic and acidic residues predominate over residues Pro-39–Arg-49.

It belongs to the SspK family.

It localises to the spore core. The protein is Small, acid-soluble spore protein K of Bacillus pumilus (strain SAFR-032).